The chain runs to 181 residues: c-Myc-binding protein homolog (181 aa).

Over residues 111–127 (ESTEAAEQQQQQQQQEN) the composition is skewed to low complexity. 2 disordered regions span residues 111-145 (ESTEAAEQQQQQQQQENGETELEKPNESSADVAEI) and 159-181 (VVTTDEAAQPSPTVQAEASGSSE). Positions 168–181 (PSPTVQAEASGSSE) are enriched in polar residues.

The protein belongs to the AMY1 family.

It is found in the nucleus. This is c-Myc-binding protein homolog from Drosophila melanogaster (Fruit fly).